The following is a 423-amino-acid chain: Alpha-1-antichymotrypsin (423 aa).

Residues 1–23 (MERMLPLLALGLLAAGFCPAVLC) form the signal peptide. 5 N-linked (GlcNAc...) asparagine glycosylation sites follow: asparagine 33, asparagine 93, asparagine 106, asparagine 127, and asparagine 186. The DNA-binding element occupies 235-237 (KKK). N-linked (GlcNAc...) asparagine glycosylation occurs at asparagine 271. Positions 369–394 (GTEASAATAVKITLLSALVETRTIVR) are RCL. The O-glycosylated at one site stretch occupies residues 381-389 (TLLSALVET).

Belongs to the serpin family. In terms of assembly, interacts with DNAJC1. In terms of processing, N- and O-glycosylated. As to expression, plasma. Synthesized in the liver. Like the related alpha-1-antitrypsin, its concentration increases in the acute phase of inflammation or infection. Found in the amyloid plaques from the hippocampus of Alzheimer disease brains.

The protein localises to the secreted. In terms of biological role, although its physiological function is unclear, it can inhibit neutrophil cathepsin G and mast cell chymase, both of which can convert angiotensin-1 to the active angiotensin-2. The chain is Alpha-1-antichymotrypsin (SERPINA3) from Homo sapiens (Human).